We begin with the raw amino-acid sequence, 377 residues long: Copper-containing nitrite reductase (377 aa).

A signal peptide (tat-type signal) is located at residues 1–35; sequence MTNTLQMTRRTMLTGAAVAGALTPILTSGGGNASP. Plastocyanin-like domains follow at residues 99–194 and 259–360; these read MTFD…IMVL and GAVG…FKVT. Residues His132, His137, His172, Cys173, His182, Met187, and His343 each contribute to the Cu cation site.

This sequence belongs to the multicopper oxidase family. As to quaternary structure, homotrimer. It depends on Cu(2+) as a cofactor. Cu(+) is required as a cofactor. The cofactor is FAD. Post-translationally, predicted to be exported by the Tat system. The position of the signal peptide cleavage has not been experimentally proven.

It localises to the periplasm. The catalysed reaction is nitric oxide + Fe(III)-[cytochrome c] + H2O = Fe(II)-[cytochrome c] + nitrite + 2 H(+). Its pathway is nitrogen metabolism; nitrate reduction (denitrification); dinitrogen from nitrate: step 2/4. This Rhizobium sullae (Rhizobium hedysari) protein is Copper-containing nitrite reductase (nirK).